We begin with the raw amino-acid sequence, 173 residues long: Large ribosomal subunit protein uL10 (173 aa).

It belongs to the universal ribosomal protein uL10 family. Part of the ribosomal stalk of the 50S ribosomal subunit. The N-terminus interacts with L11 and the large rRNA to form the base of the stalk. The C-terminus forms an elongated spine to which L12 dimers bind in a sequential fashion forming a multimeric L10(L12)X complex.

Its function is as follows. Forms part of the ribosomal stalk, playing a central role in the interaction of the ribosome with GTP-bound translation factors. The chain is Large ribosomal subunit protein uL10 from Micrococcus luteus (strain ATCC 4698 / DSM 20030 / JCM 1464 / CCM 169 / CCUG 5858 / IAM 1056 / NBRC 3333 / NCIMB 9278 / NCTC 2665 / VKM Ac-2230) (Micrococcus lysodeikticus).